Reading from the N-terminus, the 271-residue chain is Urease accessory protein UreD (271 aa).

Belongs to the UreD family. As to quaternary structure, ureD, UreF and UreG form a complex that acts as a GTP-hydrolysis-dependent molecular chaperone, activating the urease apoprotein by helping to assemble the nickel containing metallocenter of UreC. The UreE protein probably delivers the nickel.

It is found in the cytoplasm. Functionally, required for maturation of urease via the functional incorporation of the urease nickel metallocenter. The chain is Urease accessory protein UreD from Halalkalibacterium halodurans (strain ATCC BAA-125 / DSM 18197 / FERM 7344 / JCM 9153 / C-125) (Bacillus halodurans).